A 73-amino-acid polypeptide reads, in one-letter code: Mu-scoloptoxin(15)-Ssd1a (73 aa).

The first 20 residues, Met-1–Ala-20, serve as a signal peptide directing secretion.

In terms of processing, contains 2 disulfide bonds. Expressed by the venom gland.

Its subcellular location is the secreted. In terms of biological role, voltage-gated sodium channel inhibitor. This chain is Mu-scoloptoxin(15)-Ssd1a, found in Scolopendra dehaani (Thai centipede).